The primary structure comprises 405 residues: Tryptophan synthase beta chain (405 aa).

K98 bears the N6-(pyridoxal phosphate)lysine mark.

The protein belongs to the TrpB family. In terms of assembly, tetramer of two alpha and two beta chains. It depends on pyridoxal 5'-phosphate as a cofactor.

It catalyses the reaction (1S,2R)-1-C-(indol-3-yl)glycerol 3-phosphate + L-serine = D-glyceraldehyde 3-phosphate + L-tryptophan + H2O. Its pathway is amino-acid biosynthesis; L-tryptophan biosynthesis; L-tryptophan from chorismate: step 5/5. The beta subunit is responsible for the synthesis of L-tryptophan from indole and L-serine. The polypeptide is Tryptophan synthase beta chain (Stenotrophomonas maltophilia (strain R551-3)).